The chain runs to 515 residues: Probable coatomer subunit delta (515 aa).

Positions 161–180 (AKQAMAEKAKELKRAQKEAL) are enriched in basic and acidic residues. The segment at 161–231 (AKQAMAEKAK…GGKALKLGGK (71 aa)) is disordered. The segment covering 187 to 198 (SYQSSTGISSSS) has biased composition (low complexity). Residues 276-515 (REVVHVRTEE…TFNSENFEIV (240 aa)) form the MHD domain.

The protein belongs to the adaptor complexes medium subunit family. Delta-COP subfamily. In terms of assembly, oligomeric complex that consists of at least the alpha, beta, beta', gamma, delta, epsilon and zeta subunits.

The protein localises to the cytoplasm. It is found in the golgi apparatus membrane. It localises to the cytoplasmic vesicle. The protein resides in the COPI-coated vesicle membrane. In terms of biological role, the coatomer is a cytosolic protein complex that binds to dilysine motifs and reversibly associates with Golgi non-clathrin-coated vesicles, which further mediate biosynthetic protein transport from the ER, via the Golgi up to the trans Golgi network. Coatomer complex is required for budding from Golgi membranes, and is essential for the retrograde Golgi-to-ER transport of dilysine-tagged proteins. This chain is Probable coatomer subunit delta, found in Caenorhabditis elegans.